Consider the following 337-residue polypeptide: Phenylalanine--tRNA ligase alpha subunit (337 aa).

Mg(2+) is bound at residue E252.

Belongs to the class-II aminoacyl-tRNA synthetase family. Phe-tRNA synthetase alpha subunit type 1 subfamily. In terms of assembly, tetramer of two alpha and two beta subunits. The cofactor is Mg(2+).

It is found in the cytoplasm. The enzyme catalyses tRNA(Phe) + L-phenylalanine + ATP = L-phenylalanyl-tRNA(Phe) + AMP + diphosphate + H(+). The chain is Phenylalanine--tRNA ligase alpha subunit from Francisella tularensis subsp. novicida (strain U112).